A 149-amino-acid polypeptide reads, in one-letter code: SsrA-binding protein (149 aa).

Belongs to the SmpB family.

Its subcellular location is the cytoplasm. In terms of biological role, required for rescue of stalled ribosomes mediated by trans-translation. Binds to transfer-messenger RNA (tmRNA), required for stable association of tmRNA with ribosomes. tmRNA and SmpB together mimic tRNA shape, replacing the anticodon stem-loop with SmpB. tmRNA is encoded by the ssrA gene; the 2 termini fold to resemble tRNA(Ala) and it encodes a 'tag peptide', a short internal open reading frame. During trans-translation Ala-aminoacylated tmRNA acts like a tRNA, entering the A-site of stalled ribosomes, displacing the stalled mRNA. The ribosome then switches to translate the ORF on the tmRNA; the nascent peptide is terminated with the 'tag peptide' encoded by the tmRNA and targeted for degradation. The ribosome is freed to recommence translation, which seems to be the essential function of trans-translation. The polypeptide is SsrA-binding protein (Mesoplasma florum (strain ATCC 33453 / NBRC 100688 / NCTC 11704 / L1) (Acholeplasma florum)).